Reading from the N-terminus, the 307-residue chain is MEKNSLFSQRIRLRHLHTFVAVAQQGTLGRAAETLNLSQPALSKTLNELEQLTGARLFERGRQGAQLTLPGEQFLTHAVRVLDAINTAGRSLHRKEGLNNDVVRVGALPTAALGILPSVIGQFHQQQKETTLQVATMSNPMILAGLKTGEIDIGIGRMSDPELMTGLNYELLFLESLKLVVRPNHPLLQENVTLSRVLEWPVVVSPEGTAPRQHSDALVQSQGCKIPSGCIETLSASLSRQLTVEYDYVWFVPSGAVKDDLRHATLVALPVPGHGAGEPIGILTRVDATFSSGCQLMINAIRKSMPF.

The HTH lysR-type domain maps to 11-68; sequence IRLRHLHTFVAVAQQGTLGRAAETLNLSQPALSKTLNELEQLTGARLFERGRQGAQLT. A DNA-binding region (H-T-H motif) is located at residues 28-47; the sequence is LGRAAETLNLSQPALSKTLN.

Belongs to the LysR transcriptional regulatory family.

This is an uncharacterized protein from Escherichia coli (strain K12).